The sequence spans 326 residues: Photosystem II assembly factor Ycf39 (326 aa).

The protein belongs to the NmrA-type oxidoreductase family. Ycf39 subfamily. In terms of assembly, purified in several chlorophyll- and carotenoid-containing complexes, including photosystem II (PSII) assembly intermediate complex RCII* (iD1, D1, D2, PsbE, PsbF, PsbI, Ycf39, Ycf48, HliC and HliD) and the Ycf39-Hlip complex (Ycf39, HliC, HliD and pigments). Tagged protein does not pull down mature PSII.

The protein resides in the cellular thylakoid membrane. Its function is as follows. Requires HliD to bind pigments. The Ycf39-Hlip complex binds D1 at an early stage of PSII assembly along with Ycf48, ribosomes and ChlG, the last enzyme in chlorophyll biosynthesis; it may be involved in chlorophyll reuse and delivery to D1 in the initial stages of PSII assembly. The Ycf39-Hlip complex efficiently quenches chlorophyll fluorescence, contributing to photoprotection. The sequence is that of Photosystem II assembly factor Ycf39 from Synechocystis sp. (strain ATCC 27184 / PCC 6803 / Kazusa).